The sequence spans 43 residues: Myotoxin-1 (43 aa).

3 disulfides stabilise this stretch: cysteine 4-cysteine 36, cysteine 11-cysteine 30, and cysteine 18-cysteine 37.

The protein belongs to the crotamine-myotoxin family. In terms of assembly, monomer. As to expression, expressed by the venom gland.

It is found in the secreted. Cationic peptide that possesses multiple functions. It acts as a cell-penetrating peptide (CPP), and as a potent voltage-gated potassium channel (Kv) inhibitor. It exhibits antimicrobial activities, hind limb paralysis, and severe muscle necrosis by a non-enzymatic mechanism. In Crotalus concolor (Midget faded rattlesnake), this protein is Myotoxin-1.